The following is a 377-amino-acid chain: Chaperone protein DnaJ (377 aa).

The J domain maps to 5 to 70 (DYYEVLGVSR…DKKAAYDQFG (66 aa)). A CR-type zinc finger spans residues 133–211 (GLTKELRIPT…CHGDGRVEKS (79 aa)). Residues C146, C149, C163, C166, C185, C188, C199, and C202 each contribute to the Zn(2+) site. 4 CXXCXGXG motif repeats span residues 146-153 (CDLCEGSG), 163-170 (CGTCHGQG), 185-192 (CPTCHGRG), and 199-206 (CTKCHGDG).

The protein belongs to the DnaJ family. As to quaternary structure, homodimer. Zn(2+) is required as a cofactor.

Its subcellular location is the cytoplasm. Functionally, participates actively in the response to hyperosmotic and heat shock by preventing the aggregation of stress-denatured proteins and by disaggregating proteins, also in an autonomous, DnaK-independent fashion. Unfolded proteins bind initially to DnaJ; upon interaction with the DnaJ-bound protein, DnaK hydrolyzes its bound ATP, resulting in the formation of a stable complex. GrpE releases ADP from DnaK; ATP binding to DnaK triggers the release of the substrate protein, thus completing the reaction cycle. Several rounds of ATP-dependent interactions between DnaJ, DnaK and GrpE are required for fully efficient folding. Also involved, together with DnaK and GrpE, in the DNA replication of plasmids through activation of initiation proteins. This chain is Chaperone protein DnaJ, found in Shewanella baltica (strain OS223).